The chain runs to 398 residues: Acetylornithine aminotransferase (398 aa).

Residues 105–106 (GA) and F138 each bind pyridoxal 5'-phosphate. R141 serves as a coordination point for N(2)-acetyl-L-ornithine. Residue 223–226 (DEVQ) coordinates pyridoxal 5'-phosphate. K252 carries the post-translational modification N6-(pyridoxal phosphate)lysine. T280 contributes to the N(2)-acetyl-L-ornithine binding site. T281 contacts pyridoxal 5'-phosphate.

Belongs to the class-III pyridoxal-phosphate-dependent aminotransferase family. ArgD subfamily. In terms of assembly, homodimer. Pyridoxal 5'-phosphate is required as a cofactor.

It is found in the cytoplasm. The enzyme catalyses N(2)-acetyl-L-ornithine + 2-oxoglutarate = N-acetyl-L-glutamate 5-semialdehyde + L-glutamate. It functions in the pathway amino-acid biosynthesis; L-arginine biosynthesis; N(2)-acetyl-L-ornithine from L-glutamate: step 4/4. In Methanocaldococcus jannaschii (strain ATCC 43067 / DSM 2661 / JAL-1 / JCM 10045 / NBRC 100440) (Methanococcus jannaschii), this protein is Acetylornithine aminotransferase.